Consider the following 234-residue polypeptide: Enolase-phosphatase E1 (234 aa).

Positions 13 and 15 each coordinate Mg(2+). Substrate-binding positions include 127–128 (SS) and lysine 164. A Mg(2+)-binding site is contributed by aspartate 191.

The protein belongs to the HAD-like hydrolase superfamily. MasA/MtnC family. Monomer. It depends on Mg(2+) as a cofactor.

It is found in the cytoplasm. The protein localises to the nucleus. The enzyme catalyses 5-methylsulfanyl-2,3-dioxopentyl phosphate + H2O = 1,2-dihydroxy-5-(methylsulfanyl)pent-1-en-3-one + phosphate. It functions in the pathway amino-acid biosynthesis; L-methionine biosynthesis via salvage pathway; L-methionine from S-methyl-5-thio-alpha-D-ribose 1-phosphate: step 3/6. It participates in amino-acid biosynthesis; L-methionine biosynthesis via salvage pathway; L-methionine from S-methyl-5-thio-alpha-D-ribose 1-phosphate: step 4/6. Bifunctional enzyme that catalyzes the enolization of 2,3-diketo-5-methylthiopentyl-1-phosphate (DK-MTP-1-P) into the intermediate 2-hydroxy-3-keto-5-methylthiopentenyl-1-phosphate (HK-MTPenyl-1-P), which is then dephosphorylated to form the acireductone 1,2-dihydroxy-3-keto-5-methylthiopentene (DHK-MTPene). This Podospora anserina (strain S / ATCC MYA-4624 / DSM 980 / FGSC 10383) (Pleurage anserina) protein is Enolase-phosphatase E1.